A 1732-amino-acid chain; its full sequence is MSGEVRLRQLEQFILDGPAQTNGQCFSVETLLDILICLYDECNNSPLRREKNILEYLEWAKPFTSKVKQMRLHREDFEILKVIGRGAFGEVAVVKLKNADKVFAMKILNKWEMLKRAETACFREERDVLVNGDSKWITTLHYAFQDDNNLYLVMDYYVGGDLLTLLSKFEDRLPEEMARFYLAEMVIAIDSVHQLHYVHRDIKPDNILMDMNGHIRLADFGSCLKLMEDGTVQSSVAVGTPDYISPEILQAMEDGKGRYGPECDWWSLGVCMYEMLYGETPFYAESLVETYGKIMNHKERFQFPTQVTDVSENAKDLIRRLICSREHRLGQNGIEDFKKHPFFSGIDWDNIRNCEAPYIPEVSSPTDTSNFDVDDDCLKNSETMPPPTHTAFSGHHLPFVGFTYTSSCVLSDRSCLRVTAGPTSLDLDVNVQRTLDNNLATEAYERRIKRLEQEKLELTRKLQESTQTVQALQYSTVDGPLTASKDLEIKSLKEEIEKLRKQVAEVNHLEQQLEEANSVRRELDDAFRQIKAFEKQIKTLQQEREELNKELVQASERLKNQSKELKDAHCQRKLAMQEFMEINERLTELHTQKQKLARHVRDKEEEVDLVMQKAESLRQELRRAERAKKELEVHTEALIAEASKDRKLREQSRHYSKQLENELEGLKQKQISYSPGICSIEHQQEITKLKTDLEKKSIFYEEEISKREGIHASEIKNLKKELHDSEGQQLALNKEIMVLKDKLEKTRRESQSEREEFENEFKQQYEREKVLLTEENKKLTSELDKLTSLYESLSLRNQHLEEEVKDLADKKESVAHWEAQITEIIQWVSDEKDARGYLQALASKMTEELEALRNSSLGTRATDMPWKMRRFAKLDMSARLELQSALDAEIRAKQAIQEELNKVKASNIITECKLKDSEKKNLELLSEIEQLIKDTEELRSEKGVEHRDSQHSFLAFLNTPTDALDQFERSPSCTPAGKGRRIADSAPLPVHTPTLRKKGCPASAGFPPKRKTHQFFVKSFTAPTKCHQCTSLMVGLIRQGCSCEVCGFSCHITCVNKAPTTCPVPPEQTKGPLGIDPQKGVGTAYEGHVRIPKPAGVKKGWQRALAVVCDFKLFLYDIAEGKASQPSSVISQVIDMRDEEFSVSSVLASDVIHASRKDIPCIFRVTASQLSAPSDKCSILMLADSETERSKWVGVLSELHKVLKKNKFRDRSVYVPKEAYDSTLPLIKTTQAAAIIDHERVALGNEEGLFVVHVTKDEIIRVGDNKKIHQIELIPSDQLVAVISGRNRHVRLFPMSALDGRETDFYKLAETKGCQTIAAGKVRHGALSCLCVAMKRQVLCYELFQSKTRHRKFKEIQVPCNVQWMAIFSEHLCVGFQSGFLRYPLNGEGSPCNMLHSNDHTLAFITHQPMDAICAVEISNKEYLLCFSSIGIYTDCQGRRSRQQELMWPANPSSCCYNAPYLSIYSENAVDIFDVNSMEWIQTLPLKKVRPLNTEGSLNLLGLETIRLIYFKNKMAEGDELVVPETSDNSRKQMVRNINNKRRYSFRVPEEERMQQRREMLRDPEMRNKLISNPTNFNHIAHMGPGDGIQILKDLPMNPRPQESRTVFSGSVSIPSITKSRPEPGRSMSASSGLSARSSAQNGSALKREFSGGSYNTKRQPMPSPSEGSLSSGGVDQGSDAPVRDYDGEDSDSPRHSTASNSSNLSSPPSPVSPRKTKSLSLESTDRGSWDP.

Residues 77–343 (FEILKVIGRG…IEDFKKHPFF (267 aa)) enclose the Protein kinase domain. ATP-binding positions include 83–91 (IGRGAFGEV) and Lys106. Asp201 acts as the Proton acceptor in catalysis. Residues Ser222 and Ser234 each carry the phosphoserine; by autocatalysis modification. Residue Thr240 is modified to Phosphothreonine; by autocatalysis. An AGC-kinase C-terminal domain is found at 344-414 (SGIDWDNIRN…TSSCVLSDRS (71 aa)). 3 coiled-coil regions span residues 437-670 (NNLA…KQKQ), 713-820 (SEIK…WEAQ), and 880-943 (LELQ…SEKG). The segment at 973–1002 (CTPAGKGRRIADSAPLPVHTPTLRKKGCPA) is disordered. A Phorbol-ester/DAG-type zinc finger spans residues 1012-1062 (THQFFVKSFTAPTKCHQCTSLMVGLIRQGCSCEVCGFSCHITCVNKAPTTC). The 120-residue stretch at 1082–1201 (GTAYEGHVRI…WVGVLSELHK (120 aa)) folds into the PH domain. A Phosphoserine modification is found at Ser1127. In terms of domain architecture, CNH spans 1227-1499 (IKTTQAAAII…RPLNTEGSLN (273 aa)). Ser1545 carries the phosphoserine modification. A CRIB domain is found at 1571-1584 (ISNPTNFNHIAHMG). The interval 1592–1732 (LKDLPMNPRP…ESTDRGSWDP (141 aa)) is disordered. Residues 1604-1619 (SRTVFSGSVSIPSITK) show a composition bias toward polar residues. Residues Ser1611, Ser1613, Ser1629, Ser1651, Ser1664, Ser1669, Ser1693, Ser1719, and Ser1721 each carry the phosphoserine modification. The span at 1625-1640 (GRSMSASSGLSARSSA) shows a compositional bias: low complexity. Positions 1665-1674 (PSEGSLSSGG) are enriched in low complexity.

It belongs to the protein kinase superfamily. AGC Ser/Thr protein kinase family. DMPK subfamily. In terms of assembly, homodimer and homotetramer via the coiled coil regions. Interacts tightly with GTP-bound but not GDP-bound CDC42. Forms a tripartite complex with MYO18A and LURAP1 with the latter acting as an adapter connecting CDC42BPA and MYO18A. LURAP1 binding results in activation of CDC42BPA by abolition of its negative autoregulation. Interacts with LURAP1. Interacts (via AGC-kinase C-terminal domain) with FAM89B/LRAP25 (via LRR repeat). Forms a tripartite complex with FAM89B/LRAP25 and LIMK1. The cofactor is Mg(2+). In terms of processing, proteolytically cleaved by caspases upon apoptosis induction. The cleavage at Asp-478 by CASP3 increases its kinase activity (in vitro). Highly expressed in the brain and lung and present in lower levels in all other tissues tested.

The protein resides in the cytoplasm. It localises to the cell projection. The protein localises to the lamellipodium. It catalyses the reaction L-seryl-[protein] + ATP = O-phospho-L-seryl-[protein] + ADP + H(+). It carries out the reaction L-threonyl-[protein] + ATP = O-phospho-L-threonyl-[protein] + ADP + H(+). Its activity is regulated as follows. Maintained in an inactive, closed conformation by an interaction between the kinase domain and the negative autoregulatory C-terminal coiled-coil region. Agonist binding to the phorbol ester binding site disrupts this, releasing the kinase domain to allow N-terminus-mediated dimerization and kinase activation by transautophosphorylation. Inhibited by chelerythrine chloride. Serine/threonine-protein kinase which is an important downstream effector of CDC42 and plays a role in the regulation of cytoskeleton reorganization and cell migration. Regulates actin cytoskeletal reorganization via phosphorylation of PPP1R12A and MYL9/MLC2. In concert with MYO18A and LURAP1, is involved in modulating lamellar actomyosin retrograde flow that is crucial to cell protrusion and migration. Phosphorylates: PPP1R12C, LIMK1 and LIMK2. May play a role in TFRC-mediated iron uptake. In concert with FAM89B/LRAP25 mediates the targeting of LIMK1 to the lamellipodium resulting in its activation and subsequent phosphorylation of CFL1 which is important for lamellipodial F-actin regulation. Triggers the formation of an extrusion apical actin ring required for epithelial extrusion of apoptotic cells. The chain is Serine/threonine-protein kinase MRCK alpha from Rattus norvegicus (Rat).